Consider the following 163-residue polypeptide: NADH-quinone oxidoreductase subunit B (163 aa).

[4Fe-4S] cluster contacts are provided by Cys32, Cys33, Cys98, and Cys127.

Belongs to the complex I 20 kDa subunit family. In terms of assembly, NDH-1 is composed of 14 different subunits. Subunits NuoB, C, D, E, F, and G constitute the peripheral sector of the complex. It depends on [4Fe-4S] cluster as a cofactor.

The protein resides in the cell inner membrane. It catalyses the reaction a quinone + NADH + 5 H(+)(in) = a quinol + NAD(+) + 4 H(+)(out). Functionally, NDH-1 shuttles electrons from NADH, via FMN and iron-sulfur (Fe-S) centers, to quinones in the respiratory chain. Couples the redox reaction to proton translocation (for every two electrons transferred, four hydrogen ions are translocated across the cytoplasmic membrane), and thus conserves the redox energy in a proton gradient. The polypeptide is NADH-quinone oxidoreductase subunit B (Pelobacter propionicus (strain DSM 2379 / NBRC 103807 / OttBd1)).